The primary structure comprises 100 residues: Apolipoprotein C-II (100 aa).

The first 22 residues, Met-1–Ala-22, serve as a signal peptide directing secretion. The interval Ser-66–Met-74 is lipid binding. The segment at Ser-78–Glu-100 is lipoprotein lipase cofactor.

The protein belongs to the apolipoprotein C2 family. In terms of processing, proapolipoprotein C-II is synthesized as a sialic acid containing glycoprotein which is subsequently desialylated prior to its proteolytic processing. Post-translationally, proapolipoprotein C-II, the major form found in plasma undergoes proteolytic cleavage of its N-terminal hexapeptide to generate the mature form apolipoprotein C-II, which occurs as the minor form in plasma.

The protein localises to the secreted. Its function is as follows. Component of chylomicrons, very low-density lipoproteins (VLDL), low-density lipoproteins (LDL), and high-density lipoproteins (HDL) in plasma. Plays an important role in lipoprotein metabolism as an activator of lipoprotein lipase. The polypeptide is Apolipoprotein C-II (APOC2) (Bramus lutescens (Transcaucasian mole vole)).